Here is a 386-residue protein sequence, read N- to C-terminus: Eukaryotic translation initiation factor 3 subunit M (386 aa).

The PCI domain occupies 181–343 (NSELASKVMI…RKVHISSTMH (163 aa)).

This sequence belongs to the eIF-3 subunit M family. Component of the eukaryotic translation initiation factor 3 (eIF-3) complex.

The protein resides in the cytoplasm. In terms of biological role, component of the eukaryotic translation initiation factor 3 (eIF-3) complex, which is involved in protein synthesis of a specialized repertoire of mRNAs and, together with other initiation factors, stimulates binding of mRNA and methionyl-tRNAi to the 40S ribosome. The eIF-3 complex specifically targets and initiates translation of a subset of mRNAs involved in cell proliferation. This Culex quinquefasciatus (Southern house mosquito) protein is Eukaryotic translation initiation factor 3 subunit M.